A 351-amino-acid polypeptide reads, in one-letter code: Small ribosomal subunit biogenesis GTPase RsgA (351 aa).

A compositionally biased stretch (basic residues) spans 1–12 (MAKHKLSKGQQR). A disordered region spans residues 1-37 (MAKHKLSKGQQRRVRENHQRRLKKQDNKPEMDDNQLG). The segment covering 13–31 (RVRENHQRRLKKQDNKPEM) has biased composition (basic and acidic residues). The CP-type G domain occupies 112 to 274 (YYDGIKPIAA…VIDSPGVREF (163 aa)). GTP is bound by residues 160–163 (NKID) and 214–222 (GQSGVGKSS). Zn(2+)-binding residues include Cys298, Cys303, His305, and Cys311.

The protein belongs to the TRAFAC class YlqF/YawG GTPase family. RsgA subfamily. Monomer. Associates with 30S ribosomal subunit, binds 16S rRNA. Requires Zn(2+) as cofactor.

The protein localises to the cytoplasm. One of several proteins that assist in the late maturation steps of the functional core of the 30S ribosomal subunit. Helps release RbfA from mature subunits. May play a role in the assembly of ribosomal proteins into the subunit. Circularly permuted GTPase that catalyzes slow GTP hydrolysis, GTPase activity is stimulated by the 30S ribosomal subunit. The protein is Small ribosomal subunit biogenesis GTPase RsgA of Photorhabdus laumondii subsp. laumondii (strain DSM 15139 / CIP 105565 / TT01) (Photorhabdus luminescens subsp. laumondii).